A 123-amino-acid chain; its full sequence is Small ribosomal subunit protein uS13 (123 aa).

The interval 95 to 123 is disordered; it reads GLPVRGQKTKTNARTRKGPKRAISGKKNK.

Belongs to the universal ribosomal protein uS13 family. In terms of assembly, part of the 30S ribosomal subunit. Forms a loose heterodimer with protein S19. Forms two bridges to the 50S subunit in the 70S ribosome.

Located at the top of the head of the 30S subunit, it contacts several helices of the 16S rRNA. In the 70S ribosome it contacts the 23S rRNA (bridge B1a) and protein L5 of the 50S subunit (bridge B1b), connecting the 2 subunits; these bridges are implicated in subunit movement. Contacts the tRNAs in the A and P-sites. The protein is Small ribosomal subunit protein uS13 of Clostridium novyi (strain NT).